Here is a 583-residue protein sequence, read N- to C-terminus: Poly [ADP-ribose] polymerase 2 (583 aa).

Positions 1–77 (MAARRRRSTG…GMPGRSWASK (77 aa)) are disordered. The interval 1–103 (MAARRRRSTG…VDPECTAKVG (103 aa)) is N-terminal region (NTR). 2 consecutive short sequence motifs (nuclear localization signal) follow at residues 21-22 (KR) and 35-40 (PAKKTR). 2 positions are modified to N6-acetyllysine: K37 and K38. The span at 57–67 (ANKDRTEDKQD) shows a compositional bias: basic and acidic residues. In terms of domain architecture, WGR spans 104 to 201 (KAHVYCEGND…EKFEKVPGKY (98 aa)). A phosphoserine mark is found at S226 and S232. In terms of domain architecture, PARP alpha-helical spans 231 to 348 (ESQLDLRVQE…DIEIAIKLVK (118 aa)). Positions 356–583 (HPLDQHYRNL…KVQFNFLQLW (228 aa)) constitute a PARP catalytic domain. Residues 428–430 (HGS), G437, R444, and S470 each bind NAD(+). The active-site For poly [ADP-ribose] polymerase activity is E558.

This sequence belongs to the ARTD/PARP family. In terms of assembly, component of a base excision repair (BER) complex, containing at least XRCC1, PARP1, POLB and LRIG3. Homo- and heterodimer with PARP1. Interacts (via the PARP catalytic domain) with HPF1. Interacts with core nucleosomes. Auto poly-ADP-ribosylated on serine residues, leading to dissociation of the PARP2-HPF1 complex from chromatin. Poly-ADP-ribosylated by PARP1. In terms of processing, acetylation reduces DNA binding and enzymatic activity. Post-translationally, proteolytically cleaved by caspase-8 (CASP8) in response to apoptosis, leading to its inactivation. In terms of tissue distribution, widely expressed, mainly in actively dividing tissues. The highest levels are in the brain, heart, pancreas, skeletal muscle and testis; also detected in kidney, liver, lung, placenta, ovary and spleen; levels are low in leukocytes, colon, small intestine, prostate and thymus.

The protein resides in the nucleus. The protein localises to the chromosome. It carries out the reaction NAD(+) + (ADP-D-ribosyl)n-acceptor = nicotinamide + (ADP-D-ribosyl)n+1-acceptor + H(+).. The enzyme catalyses L-seryl-[protein] + NAD(+) = O-(ADP-D-ribosyl)-L-seryl-[protein] + nicotinamide + H(+). It catalyses the reaction L-aspartyl-[protein] + NAD(+) = 4-O-(ADP-D-ribosyl)-L-aspartyl-[protein] + nicotinamide. The catalysed reaction is L-glutamyl-[protein] + NAD(+) = 5-O-(ADP-D-ribosyl)-L-glutamyl-[protein] + nicotinamide. Its activity is regulated as follows. ADP-ribosyltransferase activity is regulated via an allosteric activation mechanism. In absence of activation signal, PARP2 is autoinhibited by the PARP alpha-helical domain (also named HD region), which prevents effective NAD(+)-binding. Activity is highly stimulated by signals, which unfold the PARP alpha-helical domain, relieving autoinhibition. Poly-ADP-ribosyltransferase activity is tightly regulated and PARP2 is removed from damaged chromatin following initial poly-ADP-ribosylation of chromatin to avoid prolonged residence (trapping) that has cytotoxic consequences. CHD1L promotes PARP2 removal from chromatin. ADP-ribosyltransferase activity is inhibited by a number of PARP inhibitors (PARPi) compounds, that are used the treatment of breast or ovarian cancers that have defects in DNA repair by homologous recombination. PARPi molecules (niraparib, talazoparib, and, to a lesser extent, olaparib) also trap PARP2 at DNA damage sites. Poly-ADP-ribosyltransferase that mediates poly-ADP-ribosylation of proteins and plays a key role in DNA repair. Mediates glutamate, aspartate or serine ADP-ribosylation of proteins: the ADP-D-ribosyl group of NAD(+) is transferred to the acceptor carboxyl group of target residues and further ADP-ribosyl groups are transferred to the 2'-position of the terminal adenosine moiety, building up a polymer with an average chain length of 20-30 units. Serine ADP-ribosylation of proteins constitutes the primary form of ADP-ribosylation of proteins in response to DNA damage. Mediates glutamate and aspartate ADP-ribosylation of target proteins in absence of HPF1. Following interaction with HPF1, catalyzes serine ADP-ribosylation of target proteins; HPF1 conferring serine specificity by completing the PARP2 active site. PARP2 initiates the repair of double-strand DNA breaks: recognizes and binds DNA breaks within chromatin and recruits HPF1, licensing serine ADP-ribosylation of target proteins, such as histones, thereby promoting decompaction of chromatin and the recruitment of repair factors leading to the reparation of DNA strand breaks. HPF1 initiates serine ADP-ribosylation but restricts the polymerase activity of PARP2 in order to limit the length of poly-ADP-ribose chains. Specifically mediates formation of branched poly-ADP-ribosylation. Branched poly-ADP-ribose chains are specifically recognized by some factors, such as APLF. In addition to proteins, also able to ADP-ribosylate DNA: preferentially acts on 5'-terminal phosphates at DNA strand breaks termini in nicked duplex. The protein is Poly [ADP-ribose] polymerase 2 of Homo sapiens (Human).